The sequence spans 457 residues: Angiopoietin-related protein 6 (457 aa).

An N-terminal signal peptide occupies residues 1–24; that stretch reads MGTARLRKLQLLLLLGAWRALGGA. 2 coiled-coil regions span residues 51-77 and 126-164; these read DSELATLRMRLGRHEELLRALQRRAAE and LLAERALDAEAEARRTTARLQQLDAQLREHAQLMSQHSS. Positions 201–235 are disordered; it reads SNTSRRLDQTPEHQREQSLRQQGPPSSLLPTGHLA. N202 is a glycosylation site (N-linked (GlcNAc...) asparagine). Positions 205–218 are enriched in basic and acidic residues; sequence RRLDQTPEHQREQS. The segment covering 219-229 has biased composition (polar residues); that stretch reads LRQQGPPSSLL. Residues 238–456 form the Fibrinogen C-terminal domain; it reads TRPVGPWRDC…KAVMLTRLVR (219 aa). Cystine bridges form between C247–C274 and C397–C410.

In terms of tissue distribution, highly expressed in the liver, specifically in hepatocytes, and weakly in the heart. Expressed in hematopoietic cells, platelets and mast cells, and detected at wounded skin.

The protein localises to the secreted. Functionally, may play a role in the wound healing process. May promote epidermal proliferation, remodeling and regeneration. May promote the chemotactic activity of endothelial cells and induce neovascularization. May counteract high-fat diet-induced obesity and related insulin resistance through increased energy expenditure. The polypeptide is Angiopoietin-related protein 6 (Angptl6) (Mus musculus (Mouse)).